A 626-amino-acid chain; its full sequence is Chaperone protein HtpG (626 aa).

The a; substrate-binding stretch occupies residues 1 to 341 (METKQFKAES…SEDLSLNISR (341 aa)). The segment at 342-552 (EILQHDRQLK…EGELSIEMEK (211 aa)) is b. The interval 490–509 (DLGIEGEEKENTSSSDDKEN) is disordered. The span at 498 to 509 (KENTSSSDDKEN) shows a compositional bias: basic and acidic residues. A c region spans residues 553 to 626 (VLNAMPNNQN…FTNNICKIMK (74 aa)).

The protein belongs to the heat shock protein 90 family. Homodimer.

It localises to the cytoplasm. Functionally, molecular chaperone. Has ATPase activity. The polypeptide is Chaperone protein HtpG (Clostridium botulinum (strain Okra / Type B1)).